Here is an 89-residue protein sequence, read N- to C-terminus: MSSGAETRGRKKSWLGKVVSDSMDKGIVVAVERRVQHPVYKKYFKKTTRLMAHDENNEAGVGDLVRITECRPLSKNKSCRLVEIVEKAK.

This sequence belongs to the universal ribosomal protein uS17 family. As to quaternary structure, part of the 30S ribosomal subunit.

Functionally, one of the primary rRNA binding proteins, it binds specifically to the 5'-end of 16S ribosomal RNA. The chain is Small ribosomal subunit protein uS17 from Chlorobaculum tepidum (strain ATCC 49652 / DSM 12025 / NBRC 103806 / TLS) (Chlorobium tepidum).